The following is a 293-amino-acid chain: Protease HtpX (293 aa).

The next 2 membrane-spanning stretches (helical) occupy residues 4–24 (IALF…VLSL) and 34–54 (GLLI…LLMS). His139 provides a ligand contact to Zn(2+). Residue Glu140 is part of the active site. His143 contacts Zn(2+). Helical transmembrane passes span 158–178 (VVNT…AGFM) and 193–213 (LIYF…ASII). Glu222 serves as a coordination point for Zn(2+).

This sequence belongs to the peptidase M48B family. Zn(2+) is required as a cofactor.

The protein localises to the cell inner membrane. This is Protease HtpX from Enterobacter sp. (strain 638).